A 512-amino-acid polypeptide reads, in one-letter code: Tyrosine-protein kinase Lyn (512 aa).

Residues 1-45 (MGCIKSKRKDNLNDDEVDSKTQPVRNTDRTIYVRDPTSNKQQRPV) are disordered. Residue Gly-2 is the site of N-myristoyl glycine attachment. The S-palmitoyl cysteine moiety is linked to residue Cys-3. Ser-19 carries the phosphoserine modification. An SH3 domain is found at 63 to 123 (EQGDIVVALY…PSNYVAKVNT (61 aa)). An SH2 domain is found at 129 to 226 (WFFKDITRKD…GLCRRLEKAC (98 aa)). The residue at position 193 (Tyr-193) is a Phosphotyrosine. The residue at position 228 (Ser-228) is a Phosphoserine. The Protein kinase domain occupies 247–501 (IKLVKKLGAG…YLQSVLDDFY (255 aa)). Residues 253-261 (LGAGQFGEV) and Lys-275 contribute to the ATP site. Phosphotyrosine occurs at positions 306 and 316. Asp-367 functions as the Proton acceptor in the catalytic mechanism. At Tyr-397 the chain carries Phosphotyrosine; by autocatalysis. Phosphotyrosine occurs at positions 460 and 473. Phosphotyrosine; by autocatalysis, CSK and MATK is present on Tyr-508.

It belongs to the protein kinase superfamily. Tyr protein kinase family. SRC subfamily. In terms of assembly, interacts with TEC. Interacts (via SH2 domain) with FLT3 (tyrosine phosphorylated). Interacts with LIME1 and with CD79A upon activation of the B-cell antigen receptor. Interacts with the B-cell receptor complex. Interacts with phosphorylated THEMIS2. Interacts with EPOR. Interacts with MS4A2/FCER1B. Interaction (via the SH2 and SH3 domains) with MUC1 is stimulated by IL7 and the subsequent phosphorylation increases the binding between MUC1 and CTNNB1/beta-catenin. Interacts with ADAM15. Interacts with NDFIP2 and more weakly with NDFIP1. Interacts with FASLG. Interacts with KIT. Interacts with HCLS1. Interacts with FCGR2B. Interacts with FCGR1A; the interaction may be indirect. Interacts with CD19, CD22, CD79A and CD79B. Interacts (via SH3 domain) with CBLC, PPP1R15A and PDE4A. Interacts with TGFB1I1. Interacts (via SH3 domain) with PIK3R1, the regulatory subunit of phosphatidylinositol 3-kinase; this interaction enhances phosphatidylinositol 3-kinase activity. Interacts with CSF2RB, the common subunit of the IL3, IL5 and CSF2 receptors. Interacts with PAG1; identified in a complex with PAG1 and STAT3. Interacts with ABL1. Interacts with PTPN6/SHP-1. Interacts (via SH3 domain) with SCIMP (via proline-rich region). This interaction facilitates the phosphorylation of SCIMP on 'Tyr-96', which enhances binding of SCIMP to TLR4, and consequently the phosphorylation of TLR4 in response to stimulation by lipopolysaccharide in macrophages. Interacts with LPXN (via LD motif 3) and the interaction is induced upon B-cell antigen receptor (BCR) activation. Interacts (via SH3-domain) with ANKRD54 (via ankyrin repeat region) in an activation-independent status of LYN. Forms a multiprotein complex with ANKRD54 and HCLS1. Interacts (via SH2 and SH3 domains) with UNC119; leading to LYN activation. Interacts with CD36. Interacts with LYN. Interacts with SKAP1 and FYB1; this interaction promotes the phosphorylation of CLNK. Interacts with BCAR1/CAS and NEDD9/HEF1. In terms of processing, ubiquitinated by CBL, leading to its degradation. Autophosphorylated. Phosphorylated on tyrosine residues in response to KIT signaling. Phosphorylation at Tyr-397 is required for optimal activity. Phosphorylation at Tyr-508 inhibits kinase activity. Phosphorylated at Tyr-508 by CSK. Dephosphorylated by PTPRC/CD45. Becomes rapidly phosphorylated upon activation of the B-cell receptor and the immunoglobulin receptor FCGR1A. Phosphorylated in response to ITGB1 in B-cells. Detected in bone marrow-derived monocytes and macrophages (at protein level). Expressed predominantly in B-lymphoid and myeloid cells.

It is found in the cell membrane. Its subcellular location is the nucleus. The protein resides in the cytoplasm. It localises to the perinuclear region. The protein localises to the golgi apparatus. It is found in the membrane. It catalyses the reaction L-tyrosyl-[protein] + ATP = O-phospho-L-tyrosyl-[protein] + ADP + H(+). With respect to regulation, subject to autoinhibition, mediated by intramolecular interactions between the SH2 domain and the C-terminal phosphotyrosine. Phosphorylation at Tyr-397 is required for optimal activity. Phosphorylated by CSK at Tyr-508; phosphorylation at Tyr-508 inhibits kinase activity. Kinase activity is modulated by dephosphorylation by PTPRC/CD45. Inhibited by dasatinib, PP2, and SU6656. Non-receptor tyrosine-protein kinase that transmits signals from cell surface receptors and plays an important role in the regulation of innate and adaptive immune responses, hematopoiesis, responses to growth factors and cytokines, integrin signaling, but also responses to DNA damage and genotoxic agents. Functions primarily as negative regulator, but can also function as activator, depending on the context. Required for the initiation of the B-cell response, but also for its down-regulation and termination. Plays an important role in the regulation of B-cell differentiation, proliferation, survival and apoptosis, and is important for immune self-tolerance. Acts downstream of several immune receptors, including the B-cell receptor, CD79A, CD79B, CD5, CD19, CD22, FCER1, FCGR2, FCGR1A, TLR2 and TLR4. Plays a role in the inflammatory response to bacterial lipopolysaccharide. Mediates the responses to cytokines and growth factors in hematopoietic progenitors, platelets, erythrocytes, and in mature myeloid cells, such as dendritic cells, neutrophils and eosinophils. Acts downstream of EPOR, KIT, MPL, the chemokine receptor CXCR4, as well as the receptors for IL3, IL5 and CSF2. Plays an important role in integrin signaling. Regulates cell proliferation, survival, differentiation, migration, adhesion, degranulation, and cytokine release. Involved in the regulation of endothelial activation, neutrophil adhesion and transendothelial migration. Down-regulates signaling pathways by phosphorylation of immunoreceptor tyrosine-based inhibitory motifs (ITIM), that then serve as binding sites for phosphatases, such as PTPN6/SHP-1, PTPN11/SHP-2 and INPP5D/SHIP-1, that modulate signaling by dephosphorylation of kinases and their substrates. Phosphorylates LIME1 in response to CD22 activation. Phosphorylates BTK, CBL, CD5, CD19, CD72, CD79A, CD79B, CSF2RB, DOK1, HCLS1, MS4A2/FCER1B, SYK and TEC. Phosphorylates PIRB at Tyr-794 and Tyr-824, which is required for PIRB interaction with PTPN6/SHP-1 and PTPN11/SHP-2. Promotes phosphorylation of SIRPA, PTPN6/SHP-1, PTPN11/SHP-2 and INPP5D/SHIP-1. Required for rapid phosphorylation of FER in response to FCER1 activation. Mediates KIT phosphorylation. Acts as an effector of EPOR (erythropoietin receptor) in controlling KIT expression and may play a role in erythroid differentiation during the switch between proliferation and maturation. Depending on the context, activates or inhibits several signaling cascades. Regulates phosphatidylinositol 3-kinase activity and AKT1 activation. Regulates activation of the MAP kinase signaling cascade, including activation of MAP2K1/MEK1, MAPK1/ERK2, MAPK3/ERK1, MAPK8/JNK1 and MAPK9/JNK2. Mediates activation of STAT5A and/or STAT5B. Phosphorylates LPXN on 'Tyr-72'. Kinase activity facilitates TLR4-TLR6 heterodimerization and signal initiation. Phosphorylates SCIMP on 'Tyr-96'; this enhances binding of SCIMP to TLR4, promoting the phosphorylation of TLR4, and a selective cytokine response to lipopolysaccharide in macrophages. Phosphorylates CLNK. Phosphorylates BCAR1/CAS and NEDD9/HEF1. The protein is Tyrosine-protein kinase Lyn (Lyn) of Mus musculus (Mouse).